A 450-amino-acid polypeptide reads, in one-letter code: Deoxyguanosinetriphosphate triphosphohydrolase-like protein (450 aa).

The region spanning 61-201 (RLTHSLEVAQ…AKLAPELNAD (141 aa)) is the HD domain.

It belongs to the dGTPase family. Type 2 subfamily.

The sequence is that of Deoxyguanosinetriphosphate triphosphohydrolase-like protein from Pasteurella multocida (strain Pm70).